The chain runs to 71 residues: Brevinin-1HN1 (71 aa).

Positions 1–22 (MFTSKKPLLLLFFLGTINLSLC) are cleaved as a signal peptide. The propeptide occupies 23-45 (EQERDADEEERRDDPDERDVEVE). Residues C65 and C71 are joined by a disulfide bond.

As to expression, expressed by the skin glands.

The protein resides in the secreted. Functionally, has antimicrobial activity against Gram-positive bacteria and fungi but has weak or no activity against a range of Gram-negative bacteria except P.faecalis. Active against the Gram-positive bacteria E.faecium 091299 (MIC=19 uM), E.faecalis 981 (MIC=19 uM), S.aureus ATCC 25923 (MIC=1.2 uM), S.carnosus KHS (MIC=4.8 uM), B.licheniformis X39 (MIC=2.4 uM) and R.rhodochrous X15 (MIC=1.2 uM). Active against the Gram-negative bacterium P.faecalis X29 (MIC=4.8 uM), is virtually inactive against E.coli ATCC 25922 (MIC=150 uM) and inactive against P.aeruginosa and S.typhi. Has antifungal activity against C.albicans ATCC 2002 (MIC=2.4 uM) and is also active against the slime mold 090223 (MIC=1.2 uM). Has low hemolytic activity against human erythrocytes (LC(50)=75 uM). The sequence is that of Brevinin-1HN1 from Odorrana hainanensis (Odor frog).